The chain runs to 147 residues: MTLLSAEENAHVTSLWGKVDVEKVGGEALGRLLVVYPWTQRFFESFGDLSSPSAVMGNPKVKAHGKKVLSAFSEGLHHLDNLKGTFAQLSELHCDKLHVDPQNFTLLGNVLVVVLAEHFGNAFSPAVQAAFQKVVAGVANALAHKYH.

Residues 3–147 (LLSAEENAHV…VANALAHKYH (145 aa)) enclose the Globin domain. The residue at position 13 (Thr-13) is a Phosphothreonine. Ser-45 bears the Phosphoserine mark. Lys-60 carries the N6-acetyllysine modification. Residue His-64 participates in heme b binding. Lys-83 carries the post-translational modification N6-acetyllysine. His-93 provides a ligand contact to heme b. Cys-94 carries the S-nitrosocysteine modification. At Lys-145 the chain carries N6-acetyllysine.

Belongs to the globin family. As to quaternary structure, heterotetramer of two alpha chains and two beta chains. Red blood cells.

Its function is as follows. Involved in oxygen transport from the lung to the various peripheral tissues. In Eulemur fulvus fulvus (Brown lemur), this protein is Hemoglobin subunit beta (HBB).